Here is a 336-residue protein sequence, read N- to C-terminus: G-protein coupled receptor homolog FPV027 (336 aa).

Topologically, residues 1–31 are extracellular; sequence MSMNNITSKMNQDSYGYFQLHMSDFTRVSLS. N-linked (GlcNAc...) asparagine; by host glycosylation is present at Asn5. A helical membrane pass occupies residues 32–52; it reads IVFTLVFLVGIIGNAVIIWFI. Residues 53–63 lie on the Cytoplasmic side of the membrane; that stretch reads GFKWTKTISTL. A helical membrane pass occupies residues 64 to 84; sequence LFINLALADSLFLIFIPVYTV. The Extracellular segment spans residues 85-101; it reads YVLSNFHWYLGEFLCRV. The cysteines at positions 99 and 178 are disulfide-linked. Residues 102–122 form a helical membrane-spanning segment; it reads SSFFFTTNMYASMFLLTFISI. The Cytoplasmic portion of the chain corresponds to 123–143; that stretch reads DKYLTLTSHRLVYKYRKYRNY. The helical transmembrane segment at 144 to 164 threads the bilayer; it reads YVCIGAIWCISIALGVPTLYY. Residues 165–200 lie on the Extracellular side of the membrane; it reads KRVILSSSRNETRCISYYGDDKHTAITIYRIIVCIR. N-linked (GlcNAc...) asparagine; by host glycosylation occurs at Asn174. The chain crosses the membrane as a helical span at residues 201 to 221; it reads FIIGYVFPMTVILLSYALIVY. The Cytoplasmic portion of the chain corresponds to 222-240; it reads KVKFINKPPNRSFMITTAS. Residues 241–261 form a helical membrane-spanning segment; the sequence is IFVFLACWTPHHVLNIISLYG. The Extracellular segment spans residues 262–276; it reads LKSTSMYNYIKESIP. A helical transmembrane segment spans residues 277–297; it reads FVNAIAFVYSAINPIIYIFVI. The Cytoplasmic segment spans residues 298 to 336; sequence RLTSTYDSDTMDELRSALLDEETTSTEDCSDIEISDISR.

This sequence belongs to the G-protein coupled receptor 1 family.

The protein localises to the host cell membrane. The sequence is that of G-protein coupled receptor homolog FPV027 from Vertebrata (FPV).